A 1506-amino-acid polypeptide reads, in one-letter code: ABC transporter C family member 9 (1506 aa).

The next 11 membrane-spanning stretches (helical) occupy residues 37–57, 84–104, 116–136, 150–170, 179–199, 315–335, 350–370, 427–447, 452–472, 541–561, and 567–587; these read MQVTFLAFFLIHLALKWFGVV, ISLLCSVSILGTHCFILLLLF, VSVFSAEVSQSFSWLFVSVVV, MLRSWWLCSFILSFSFDAHFI, FQDYADLTGLLASLFLLAVSI, AINAVFAVVNASTAYIGPYLI, LNHGYLLALGFLTAKIVETVT, FIWYVNNIWMLPIQIFSAIYI, LGLGALAALVTTLMVMACNYP, FILWGAPSLISVVTFVTCMLM, and AGAVLSALATFQMLQSPIFGL. An ABC transmembrane type-1 1 domain is found at 314-596; it reads AAINAVFAVV…LPDLLSALVQ (283 aa). The region spanning 630–853 is the ABC transporter 1 domain; it reads VEIENGAFSW…NIGFEVLVGA (224 aa). An ATP-binding site is contributed by 665 to 672; sequence GAVGSGKS. The next 5 helical transmembrane spans lie at 934-956, 976-996, 1048-1068, 1167-1187, and 1191-1211; these read LLVPFIILAQSCFQMLQIASNYW, ILLVYALLAAGSSLCVLARTI, MAVKLGWCAFSIIQIVGTIFV, LSHFVFAFSLVLLVTLPEGVI, and IAGLGVTYGLSLNVLQATVIW. The region spanning 936–1218 is the ABC transmembrane type-1 2 domain; that stretch reads VPFIILAQSC…VIWNICNAEN (283 aa). One can recognise an ABC transporter 2 domain in the interval 1257–1489; sequence FRDLQVRYAE…EDSFFSKLIK (233 aa). ATP is bound at residue 1289-1296; it reads GRTGSGKS.

This sequence belongs to the ABC transporter superfamily. ABCC family. Conjugate transporter (TC 3.A.1.208) subfamily. Ubiquitous.

It localises to the membrane. The enzyme catalyses ATP + H2O + xenobioticSide 1 = ADP + phosphate + xenobioticSide 2.. Its function is as follows. Pump for glutathione S-conjugates. This Arabidopsis thaliana (Mouse-ear cress) protein is ABC transporter C family member 9 (ABCC9).